Here is a 207-residue protein sequence, read N- to C-terminus: MAEDLDELLDEVESKFCTPDLLRRGMVEQPKGCGGGTHSSDRNQAKAKETLRSTETFKKEDDLDSLINEILEEPNLDKKPSKLKSKSSGNTSVRASIEGLGKSCSPVYLGGSSIPCGIGTNISWRACDHLRCIACDFLVVSYDDYMWDKSCDYLFFRNNMPEFHKLKAKLIKKKGTRAYACQCSWRTIEEVTDLQTDHQLRWVCGKH.

The segment at 1-75 (MAEDLDELLD…LINEILEEPN (75 aa)) is required for interaction with FAM161A. The interval 26–52 (MVEQPKGCGGGTHSSDRNQAKAKETLR) is disordered. Basic and acidic residues predominate over residues 39–52 (SSDRNQAKAKETLR).

In terms of assembly, interacts (via N-terminus) with FAM161A (via central region); the interaction is direct. As to expression, widely expressed, with highest levels in heart and brain. Also expressed in the retina (at protein level).

Its subcellular location is the cytoplasm. The protein resides in the photoreceptor inner segment. Its function is as follows. May be involved in photoreceptor outer segment disk morphogenesis. This chain is Cilia- and flagella-associated protein 418, found in Homo sapiens (Human).